The chain runs to 577 residues: Eukaryotic translation initiation factor 3 subunit D (577 aa).

Positions 103–177 (DSTKTRFGRG…KDYDKPQRNR (75 aa)) are disordered. Residues 166 to 177 (GWKDYDKPQRNR) are compositionally biased toward basic and acidic residues. The interval 305–319 (TLDMVTVNENAADAP) is RNA gate. The interval 558–577 (GSFEDDGEGDVIEENVEEED) is disordered. The span at 560–577 (FEDDGEGDVIEENVEEED) shows a compositional bias: acidic residues.

Belongs to the eIF-3 subunit D family. In terms of assembly, component of the eukaryotic translation initiation factor 3 (eIF-3) complex.

The protein resides in the cytoplasm. In terms of biological role, mRNA cap-binding component of the eukaryotic translation initiation factor 3 (eIF-3) complex, which is involved in protein synthesis of a specialized repertoire of mRNAs and, together with other initiation factors, stimulates binding of mRNA and methionyl-tRNAi to the 40S ribosome. The eIF-3 complex specifically targets and initiates translation of a subset of mRNAs involved in cell proliferation. In the eIF-3 complex, eif3d specifically recognizes and binds the 7-methylguanosine cap of a subset of mRNAs. This Sclerotinia sclerotiorum (strain ATCC 18683 / 1980 / Ss-1) (White mold) protein is Eukaryotic translation initiation factor 3 subunit D.